Here is a 102-residue protein sequence, read N- to C-terminus: Small ribosomal subunit protein uS10 (102 aa).

Belongs to the universal ribosomal protein uS10 family. In terms of assembly, part of the 30S ribosomal subunit.

Its function is as follows. Involved in the binding of tRNA to the ribosomes. In Lacticaseibacillus casei (strain BL23) (Lactobacillus casei), this protein is Small ribosomal subunit protein uS10.